A 45-amino-acid chain; its full sequence is Large ribosomal subunit protein bL34 (45 aa).

The tract at residues 1 to 45 (MTKRTFGGTSRKRKRVSGFRVRMRSHTGRRVVRTRRKRGRSRLTV) is disordered. Residues 10–45 (SRKRKRVSGFRVRMRSHTGRRVVRTRRKRGRSRLTV) show a composition bias toward basic residues.

It belongs to the bacterial ribosomal protein bL34 family.

In Prochlorococcus marinus (strain NATL2A), this protein is Large ribosomal subunit protein bL34.